We begin with the raw amino-acid sequence, 55 residues long: Ferredoxin-1 (55 aa).

4Fe-4S ferredoxin-type domains follow at residues 2-27 (YKIEETCISCGACAAECPVNAIEQGD) and 28-55 (TIFVVNADTCIDCGNCANVCPVGAPVAE). The [4Fe-4S] cluster site is built by C8, C11, C14, C18, C37, C40, C43, and C47.

Requires [4Fe-4S] cluster as cofactor.

Its function is as follows. Ferredoxins are iron-sulfur proteins that transfer electrons in a wide variety of metabolic reactions. The protein is Ferredoxin-1 of Rhodospirillum rubrum.